Consider the following 103-residue polypeptide: Sec-independent protein translocase protein TatA (103 aa).

The helical transmembrane segment at 1-21 (MGNIFSPTHLIVILLIIIVLF) threads the bilayer. A disordered region spans residues 77–103 (KRATTRVKGSSSSRKGKTSVVKKQRVK). The span at 90 to 103 (RKGKTSVVKKQRVK) shows a compositional bias: basic residues.

Belongs to the TatA/E family. In terms of assembly, the Tat system comprises two distinct complexes: a TatABC complex, containing multiple copies of TatA, TatB and TatC subunits, and a separate TatA complex, containing only TatA subunits. Substrates initially bind to the TatABC complex, which probably triggers association of the separate TatA complex to form the active translocon.

Its subcellular location is the cell inner membrane. Its function is as follows. Part of the twin-arginine translocation (Tat) system that transports large folded proteins containing a characteristic twin-arginine motif in their signal peptide across membranes. TatA could form the protein-conducting channel of the Tat system. The chain is Sec-independent protein translocase protein TatA from Bartonella henselae (strain ATCC 49882 / DSM 28221 / CCUG 30454 / Houston 1) (Rochalimaea henselae).